The sequence spans 49 residues: Large ribosomal subunit protein bL33A (49 aa).

This sequence belongs to the bacterial ribosomal protein bL33 family.

This is Large ribosomal subunit protein bL33A (rpmG1) from Enterococcus faecalis (strain ATCC 700802 / V583).